The sequence spans 437 residues: Histidine--tRNA ligase (437 aa).

This sequence belongs to the class-II aminoacyl-tRNA synthetase family. Homodimer.

It is found in the cytoplasm. It catalyses the reaction tRNA(His) + L-histidine + ATP = L-histidyl-tRNA(His) + AMP + diphosphate + H(+). This is Histidine--tRNA ligase from Leptospira biflexa serovar Patoc (strain Patoc 1 / Ames).